We begin with the raw amino-acid sequence, 335 residues long: Mitochondrial amidoxime reducing component 2 (335 aa).

The N-terminal 35 residues, 1–35 (MGASSSSALARLGLPAQARPRWLGVAVLGLAAVAL), are a transit peptide targeting the mitochondrion. Residues Lys59, Lys138, and Lys144 each participate in a glycyl lysine isopeptide (Lys-Gly) (interchain with G-Cter in ubiquitin) cross-link. Lys156 carries the post-translational modification N6-acetyllysine; alternate. A Glycyl lysine isopeptide (Lys-Gly) (interchain with G-Cter in ubiquitin); alternate cross-link involves residue Lys156. Residues Lys173, Lys187, Lys287, and Lys294 each participate in a glycyl lysine isopeptide (Lys-Gly) (interchain with G-Cter in ubiquitin) cross-link. The MOSC domain occupies 188 to 334 (GRTSRKLLPT…LRVGDPVYRM (147 aa)).

As to quaternary structure, component of a complex composed of cytochrome b5, NADH-cytochrome b5 reductase (CYB5R3) and MTARC2. Mo-molybdopterin is required as a cofactor. Ubiquitinated by PRKN during mitophagy, leading to its degradation and enhancement of mitophagy. Deubiquitinated by USP30.

It localises to the mitochondrion outer membrane. It is found in the peroxisome. The enzyme catalyses N(omega)-hydroxy-L-arginine + 2 Fe(II)-[cytochrome b5] + 2 H(+) = L-arginine + 2 Fe(III)-[cytochrome b5] + H2O. Catalyzes the reduction of N-oxygenated molecules, acting as a counterpart of cytochrome P450 and flavin-containing monooxygenases in metabolic cycles. As a component of prodrug-converting system, reduces a multitude of N-hydroxylated prodrugs particularly amidoximes, leading to increased drug bioavailability. May be involved in mitochondrial N(omega)-hydroxy-L-arginine (NOHA) reduction, regulating endogenous nitric oxide levels and biosynthesis. Postulated to cleave the N-OH bond of N-hydroxylated substrates in concert with electron transfer from NADH to cytochrome b5 reductase then to cytochrome b5, the ultimate electron donor that primes the active site for substrate reduction. The protein is Mitochondrial amidoxime reducing component 2 (MTARC2) of Macaca fascicularis (Crab-eating macaque).